Reading from the N-terminus, the 227-residue chain is Cytidylate kinase (227 aa).

12–20 (GPSGAGKGT) serves as a coordination point for ATP.

It belongs to the cytidylate kinase family. Type 1 subfamily.

The protein localises to the cytoplasm. The catalysed reaction is CMP + ATP = CDP + ADP. It catalyses the reaction dCMP + ATP = dCDP + ADP. The protein is Cytidylate kinase of Salmonella typhimurium (strain LT2 / SGSC1412 / ATCC 700720).